A 314-amino-acid chain; its full sequence is MVTSLKGRDFLTLADYSREELLFVLETAKHLKQRYLAGERVIPLLPGRHLAMIFEKSSTRTRISFETAMRELGGDALYLGWKELQLGRGETIEDTARVVSRYVDGIMARVYEHEKLEKLAQYSRVPVINGLSDLLHPAQALTDIYTIMEKKGSDLSKLKIVFIGDGGDNVLHSLMLGIGILGGKIIISSPKGYDPDPRIIKLFEEKAVPNGGEYEIIRDPYEAVRDADVVYTDVWVSMGQEAEKEKRIKDLEPYRVTVELMKHAKSDAVFMHCLPAHRGQEVVDEVIDGKWSIVWDQAENRKHVQKAILALIIP.

Carbamoyl phosphate contacts are provided by residues 58–61 (STRT), glutamine 85, arginine 109, and 136–139 (HPAQ). L-ornithine contacts are provided by residues asparagine 169, aspartate 233, and 237–238 (SM). Carbamoyl phosphate-binding positions include 273–274 (CL) and arginine 301.

This sequence belongs to the aspartate/ornithine carbamoyltransferase superfamily. OTCase family.

The protein localises to the cytoplasm. The enzyme catalyses carbamoyl phosphate + L-ornithine = L-citrulline + phosphate + H(+). Its pathway is amino-acid degradation; L-arginine degradation via ADI pathway; carbamoyl phosphate from L-arginine: step 2/2. Reversibly catalyzes the transfer of the carbamoyl group from carbamoyl phosphate (CP) to the N(epsilon) atom of ornithine (ORN) to produce L-citrulline. This chain is Ornithine carbamoyltransferase, found in Staphylothermus marinus (strain ATCC 43588 / DSM 3639 / JCM 9404 / F1).